The chain runs to 56 residues: MAAKGNREKIKLVSTAETGHFYTTTKNKRNMPEKMEIKKFDPVVRKHVVYKEAKIK.

It belongs to the bacterial ribosomal protein bL33 family.

The chain is Large ribosomal subunit protein bL33 from Glaesserella parasuis serovar 5 (strain SH0165) (Haemophilus parasuis).